The primary structure comprises 701 residues: Elongation factor G 1 (701 aa).

Residues 8–290 (ERYRNIGISA…AVIDYLPSPL (283 aa)) form the tr-type G domain. GTP-binding positions include 17–24 (AHIDAGKT), 88–92 (DTPGH), and 142–145 (NKMD).

It belongs to the TRAFAC class translation factor GTPase superfamily. Classic translation factor GTPase family. EF-G/EF-2 subfamily.

The protein localises to the cytoplasm. Its function is as follows. Catalyzes the GTP-dependent ribosomal translocation step during translation elongation. During this step, the ribosome changes from the pre-translocational (PRE) to the post-translocational (POST) state as the newly formed A-site-bound peptidyl-tRNA and P-site-bound deacylated tRNA move to the P and E sites, respectively. Catalyzes the coordinated movement of the two tRNA molecules, the mRNA and conformational changes in the ribosome. This Paraburkholderia xenovorans (strain LB400) protein is Elongation factor G 1.